Here is a 391-residue protein sequence, read N- to C-terminus: Cytochrome b (391 aa).

4 helical membrane passes run 33–53 (FGSL…FLAM), 77–98 (WLIR…YLHI), 113–133 (WSAG…GYVL), and 178–198 (FFAF…VHLL). Heme b contacts are provided by histidine 83 and histidine 97. The heme b site is built by histidine 182 and histidine 196. Position 201 (histidine 201) interacts with a ubiquinone. 4 consecutive transmembrane segments (helical) span residues 226–246 (YKDL…VLFI), 288–308 (LGGV…PILH), 320–340 (LAQI…WIGG), and 347–367 (FIII…VFFP).

It belongs to the cytochrome b family. In terms of assembly, the cytochrome bc1 complex contains 3 respiratory subunits (MT-CYB, CYC1 and UQCRFS1), 2 core proteins (UQCRC1 and UQCRC2) and probably 6 low-molecular weight proteins. It depends on heme b as a cofactor.

It localises to the mitochondrion inner membrane. Component of the ubiquinol-cytochrome c reductase complex (complex III or cytochrome b-c1 complex) that is part of the mitochondrial respiratory chain. The b-c1 complex mediates electron transfer from ubiquinol to cytochrome c. Contributes to the generation of a proton gradient across the mitochondrial membrane that is then used for ATP synthesis. This is Cytochrome b (mt-cyb) from Kryptolebias marmoratus (Mangrove killifish).